The following is a 116-amino-acid chain: Large ribosomal subunit protein eL30 (116 aa).

Belongs to the eukaryotic ribosomal protein eL30 family. In terms of assembly, component of the large ribosomal subunit.

The protein localises to the cytoplasm. Its function is as follows. Component of the large ribosomal subunit. The ribosome is a large ribonucleoprotein complex responsible for the synthesis of proteins in the cell. In Ictalurus punctatus (Channel catfish), this protein is Large ribosomal subunit protein eL30 (rpl30).